The chain runs to 411 residues: Imidazolonepropionase (411 aa).

2 residues coordinate Fe(3+): His78 and His80. Residues His78 and His80 each coordinate Zn(2+). Residues Arg87, Tyr150, and His183 each coordinate 4-imidazolone-5-propanoate. N-formimidoyl-L-glutamate is bound at residue Tyr150. Fe(3+) is bound at residue His248. His248 is a binding site for Zn(2+). 4-imidazolone-5-propanoate is bound at residue Gln251. Residue Asp322 participates in Fe(3+) binding. Asp322 serves as a coordination point for Zn(2+). N-formimidoyl-L-glutamate-binding residues include Asn324 and Gly326. Position 327 (Ser327) interacts with 4-imidazolone-5-propanoate.

This sequence belongs to the metallo-dependent hydrolases superfamily. HutI family. Zn(2+) serves as cofactor. It depends on Fe(3+) as a cofactor.

It is found in the cytoplasm. The catalysed reaction is 4-imidazolone-5-propanoate + H2O = N-formimidoyl-L-glutamate. It participates in amino-acid degradation; L-histidine degradation into L-glutamate; N-formimidoyl-L-glutamate from L-histidine: step 3/3. In terms of biological role, catalyzes the hydrolytic cleavage of the carbon-nitrogen bond in imidazolone-5-propanoate to yield N-formimidoyl-L-glutamate. It is the third step in the universal histidine degradation pathway. The chain is Imidazolonepropionase from Christiangramia forsetii (strain DSM 17595 / CGMCC 1.15422 / KT0803) (Gramella forsetii).